Here is a 426-residue protein sequence, read N- to C-terminus: Glutamate-1-semialdehyde 2,1-aminomutase (426 aa).

Lysine 265 is subject to N6-(pyridoxal phosphate)lysine.

Belongs to the class-III pyridoxal-phosphate-dependent aminotransferase family. HemL subfamily. Homodimer. It depends on pyridoxal 5'-phosphate as a cofactor.

Its subcellular location is the cytoplasm. The enzyme catalyses (S)-4-amino-5-oxopentanoate = 5-aminolevulinate. The protein operates within porphyrin-containing compound metabolism; protoporphyrin-IX biosynthesis; 5-aminolevulinate from L-glutamyl-tRNA(Glu): step 2/2. This Salmonella paratyphi A (strain ATCC 9150 / SARB42) protein is Glutamate-1-semialdehyde 2,1-aminomutase.